The following is a 523-amino-acid chain: MSFHKEDGVNSLCQKALHIVTELCFAGQVEWEKCSGIFPRDRGSQGGSSTDISVSLLAVVVSFCGLALLVVSLFVFWKLCWPCWKSKPVTSNITTLPQSISSAPTEVFETEEKKEIKENEKPAMKAIEPAIKISHTSPDIPAEVQTALKEHLIKHARVQRQITEPTSSSRHNSFRRHLPRQMQVSSVDFSMGTEPVLQRGETTTSIGRIKPELYKQKSVDSEGNQKEDVKICGKLNFTLQYDYENELLVVKIIKALDLPAKDFTGTSDPYVKMYLLPDRKKKFQTRVHRKTLNPLFDETFQFPVAYDQLSNRKLHFSVYDFDRFSRHDMIGEVILDNLFEVSDLSREATVWKDIHCATTESIDLGEIMFSLCYLPTAGRMTLTVIKCRNLKAMDITGSSDPYVKVSLMCEGRRLKKRKTTTKKNTLNPVYNEAIIFDIPPENVDQVSLSIAVMDYDRVGHNEVIGVCRTGLDAEGLGRDHWNEMLAYHRKPITHWHPLLELPGRATSFDSQGSCPSPKPPSTP.

At 1–55 (MSFHKEDGVNSLCQKALHIVTELCFAGQVEWEKCSGIFPRDRGSQGGSSTDISVS) the chain is on the vesicular side. The segment at 13 to 35 (CQKALHIVTELCFAGQVEWEKCS) is cysteine motif. A helical transmembrane segment spans residues 56–76 (LLAVVVSFCGLALLVVSLFVF). Residues 77 to 523 (WKLCWPCWKS…CPSPKPPSTP (447 aa)) lie on the Cytoplasmic side of the membrane. T136 bears the Phosphothreonine mark. C2 domains are found at residues 231 to 352 (ICGK…TVWK) and 363 to 496 (DLGE…THWH). The Ca(2+) site is built by D262, D268, D320, F321, D322, S325, D328, D394, D400, D454, and D456.

It belongs to the synaptotagmin family. As to quaternary structure, homodimer; disulfide-linked via the cysteine motif. Can also form heterodimers with SYT3, SYT6, SYT7 and SYT9. It depends on Ca(2+) as a cofactor.

The protein localises to the cytoplasmic vesicle. Its subcellular location is the secretory vesicle membrane. Ca(2+) sensor specifically required for the Ca(2+)-dependent exocytosis of secretory vesicles containing IGF1 in neurons of the olfactory bulb. Exocytosis of IGF1 is required for sensory perception of smell. Not involved in Ca(2+)-dependent synaptic vesicle exocytosis. Acts through Ca(2+) and phospholipid binding to the C2 domain: Ca(2+) induces binding of the C2-domains to phospholipid membranes and to assembled SNARE-complexes; both actions contribute to triggering exocytosis. The polypeptide is Synaptotagmin-10 (SYT10) (Pongo abelii (Sumatran orangutan)).